A 284-amino-acid polypeptide reads, in one-letter code: uncharacterized protein (284 aa).

Gln54 is a binding site for FMN. Cys83 acts as the Proton donor in catalysis. FMN is bound by residues Lys125, His153, 183-185 (NGG), and 207-208 (AN).

It belongs to the Dus family. Requires FMN as cofactor.

Catalyzes the synthesis of dihydrouridine, a modified base found in the D-loop of most tRNAs. This is an uncharacterized protein from Caenorhabditis elegans.